A 323-amino-acid chain; its full sequence is L-lactate dehydrogenase (323 aa).

NAD(+) is bound by residues V18, D39, Y69, and 83–84 (GA). 2 residues coordinate substrate: Q86 and R92. Residues S105, 122 to 124 (VAN), and S147 contribute to the NAD(+) site. Residue 124–127 (NPVD) participates in substrate binding. Residue 152 to 155 (DTGR) participates in substrate binding. Catalysis depends on H179, which acts as the Proton acceptor. Phosphotyrosine is present on Y223. T232 contacts substrate.

It belongs to the LDH/MDH superfamily. LDH family. In terms of assembly, homotetramer.

Its subcellular location is the cytoplasm. The catalysed reaction is (S)-lactate + NAD(+) = pyruvate + NADH + H(+). The protein operates within fermentation; pyruvate fermentation to lactate; (S)-lactate from pyruvate: step 1/1. Its activity is regulated as follows. Under neutral conditions, the reaction is stimulated 4-fold by fructose 1,6-bisphosphate (FBP), however the L-lactate dehydrogenase is a nonallosteric enzyme. Calcium and zinc ions at 1 mM stimulate the activity almost 2-fold. Weakly inhibited by cadmium, cobalt and copper ions. Functionally, catalyzes the conversion of lactate to pyruvate. The sequence is that of L-lactate dehydrogenase from Lactobacillus helveticus (Lactobacillus suntoryeus).